A 391-amino-acid chain; its full sequence is Homocysteine-responsive endoplasmic reticulum-resident ubiquitin-like domain member 1 protein (391 aa).

Residue methionine 1 is modified to N-acetylmethionine. At 1-263 the chain is on the cytoplasmic side; it reads MEPEPQPEPV…VEEDDEINRD (263 aa). Residues 10–72 form the Ubiquitin-like domain; the sequence is VTLLVKSPNQ…LLDHQCLQDL (63 aa). Positions 90-126 are disordered; the sequence is NPSKMPETSTKGAESTEQPDNSNQTQHPGDSSSDGLR. Over residues 95–124 the composition is skewed to polar residues; sequence PETSTKGAESTEQPDNSNQTQHPGDSSSDG. The segment at 115–200 is interaction with UBQLN1; sequence QHPGDSSSDG…ASGTFVPTPS (86 aa). At serine 135 the chain carries Phosphoserine. The helical transmembrane segment at 264–284 threads the bilayer; that stretch reads WLDWTYSAATFSVFLSILYFY. At 285–289 the chain is on the lumenal side; that stretch reads SSLSR. Residues 290 to 310 traverse the membrane as a helical segment; sequence FLMVMGATVVMYLHHVGWFPF. Residues 311 to 391 are Cytoplasmic-facing; that stretch reads RQRPVQNFPD…LPEGPPALAN (81 aa). Residues 317–361 form a disordered region; that stretch reads NFPDDGGPRDAANQDPNNNLQGGMDPEMEDPNRLPPDREVLDPEH. Residues 346-361 are compositionally biased toward basic and acidic residues; the sequence is DPNRLPPDREVLDPEH.

In terms of assembly, interacts with PSEN1 and PSEN2. Interacts with UBXN6. Interacts with UBQLN1, UBQLN2 and UBQLN4. Component of the HRD1 complex, which comprises at least SYNV1/HRD1, FAM8A1, HERPUD1/HERP, OS9, SEL1L and UBE2J1. FAM8A1 binding to SYNV1 may promote recruitment of HERPUD1 to the HRD1 complex.

It is found in the endoplasmic reticulum membrane. Component of the endoplasmic reticulum quality control (ERQC) system also called ER-associated degradation (ERAD) involved in ubiquitin-dependent degradation of misfolded endoplasmic reticulum proteins. Binds to ubiquilins and this interaction is required for efficient degradation of CD3D via the ERAD pathway. This chain is Homocysteine-responsive endoplasmic reticulum-resident ubiquitin-like domain member 1 protein (Herpud1), found in Mus musculus (Mouse).